A 532-amino-acid chain; its full sequence is Autophagy-related protein 21 (532 aa).

WD repeat units follow at residues 265 to 310 (AHDS…KPFN) and 321 to 360 (HNIA…HESF). Positions 317–321 (LRRGH) match the L/FRRG motif motif. Residues 360–380 (FEYEEDPANESDPDDEDRSSE) are disordered. Residues 361–378 (EYEEDPANESDPDDEDRS) are compositionally biased toward acidic residues.

Belongs to the WD repeat PROPPIN family.

It localises to the cytoplasm. Its subcellular location is the membrane. It is found in the vacuole membrane. Its function is as follows. Required for cytoplasm to vacuole transport (Cvt) vesicles formation and mitophagy. Involved in binding of phosphatidylethanolamine to ATG8 and in recruitment of ATG8 and ATG5 to the pre-autophagosomal structure. Protects ATG8 from ARG4-mediated cleavage. The chain is Autophagy-related protein 21 (ATG21) from Debaryomyces hansenii (strain ATCC 36239 / CBS 767 / BCRC 21394 / JCM 1990 / NBRC 0083 / IGC 2968) (Yeast).